A 222-amino-acid polypeptide reads, in one-letter code: Transmembrane reductase CYB561D2 (222 aa).

The Cytoplasmic portion of the chain corresponds to 2 to 17; sequence ALSAETESHIYRALRT. The Cytochrome b561 domain maps to 14 to 217; it reads ALRTASGAAA…NQVSNAYLYR (204 aa). The helical transmembrane segment at 18-38 threads the bilayer; it reads ASGAAAHLVALGFTIFVAVLA. At 39-46 the chain is on the lumenal side; it reads RPGSSLFS. Residues 47–67 form a helical membrane-spanning segment; that stretch reads WHPVLMSLAFSFLMTEALLVF. His-48 contributes to the heme b binding site. The Cytoplasmic portion of the chain corresponds to 68–85; that stretch reads SPESSLLHSLSRKGRARC. Heme b is bound by residues His-86 and His-120. Residues 86–106 traverse the membrane as a helical segment; sequence HWVLQLLALLCALLGLGLVIL. Over 107–122 the chain is Lumenal; sequence HKEQLGKAHLVTRHGQ. Residues 123-143 form a helical membrane-spanning segment; it reads AGLLAVLWAGLQCSGGVGLLY. The Cytoplasmic segment spans residues 144–162; it reads PKLLPRWPLAKLKLYHATS. Position 159 (His-159) interacts with heme b. A helical transmembrane segment spans residues 163-183; sequence GLVGYLLGSASLLLGMCSLWF. At 184–186 the chain is on the lumenal side; it reads TAS. A helical membrane pass occupies residues 187 to 207; that stretch reads VTGAAWYLAVLCPVLTSLVIM. At 208–222 the chain is on the cytoplasmic side; that stretch reads NQVSNAYLYRKRIQP.

It depends on heme b as a cofactor.

The protein resides in the endoplasmic reticulum membrane. It is found in the cytoplasmic vesicle membrane. The catalysed reaction is monodehydro-L-ascorbate radical(out) + L-ascorbate(in) = monodehydro-L-ascorbate radical(in) + L-ascorbate(out). It catalyses the reaction Fe(3+)(out) + L-ascorbate(in) = monodehydro-L-ascorbate radical(in) + Fe(2+)(out) + H(+). In terms of biological role, transmembrane reductase that may use ascorbate as an electron donor in the cytoplasm and transfer electrons across endoplasmic reticulum membranes to reduce monodehydro-L-ascorbate radical and iron cations Fe(3+) in the lumen of that compartment. The protein is Transmembrane reductase CYB561D2 of Homo sapiens (Human).